Here is a 147-residue protein sequence, read N- to C-terminus: Hemoglobin subunit gamma-2 (147 aa).

The 145-residue stretch at 3–147 (NFTAEDKAAI…VASALGSRYH (145 aa)) folds into the Globin domain. Thr-13 carries the post-translational modification Phosphothreonine. A phosphoserine mark is found at Ser-45, Ser-51, and Ser-53. At Lys-60 the chain carries N6-acetyllysine. Heme b is bound at residue His-64. Lys-83 carries the post-translational modification N6-acetyllysine. Residue His-93 participates in heme b binding. At Cys-94 the chain carries S-nitrosocysteine. Residues Ser-140 and Ser-144 each carry the phosphoserine modification.

It belongs to the globin family. Heterotetramer of two alpha chains and two gamma chains in fetal hemoglobin (Hb F). As to expression, red blood cells.

Gamma chains make up the fetal hemoglobin F, in combination with alpha chains. The protein is Hemoglobin subunit gamma-2 (HBG2) of Cebus albifrons (White-fronted capuchin).